Reading from the N-terminus, the 823-residue chain is Pentatricopeptide repeat-containing protein At4g33990 (823 aa).

PPR repeat units lie at residues Asn85–Arg115, Asp116–Pro151, Asp152–Trp183, Asp184–Arg214, Asp215–Thr249, Ser252–Ser280, Glu281–Arg311, Asp312–Pro346, Asp347–Leu381, Asp383–Thr413, Asp414–Ala448, Asn450–Leu484, Asp485–Val515, Asn516–Pro550, Asp551–Asp581, and Ser587–Gln617. Positions Ile622–Asp697 are type E motif. The segment at Asn698–Lys728 is type E(+) motif. Residues Met729 to Trp823 are type DYW motif.

Belongs to the PPR family. PCMP-H subfamily.

This Arabidopsis thaliana (Mouse-ear cress) protein is Pentatricopeptide repeat-containing protein At4g33990 (EMB2758).